A 306-amino-acid chain; its full sequence is D-alanine--D-alanine ligase (306 aa).

The ATP-grasp domain maps to 102–300 (KHVAKAAGIP…FGEFLRWMVE (199 aa)). Position 128-183 (128-183 (PMKPPYVVKPVREGSSFGVVIVKEDQSHPPQVITSSEWRYGDRVMVERYIAGRELT)) interacts with ATP. Residues Asp-252, Glu-267, and Asn-269 each contribute to the Mg(2+) site.

It belongs to the D-alanine--D-alanine ligase family. It depends on Mg(2+) as a cofactor. Mn(2+) is required as a cofactor.

It localises to the cytoplasm. The catalysed reaction is 2 D-alanine + ATP = D-alanyl-D-alanine + ADP + phosphate + H(+). It functions in the pathway cell wall biogenesis; peptidoglycan biosynthesis. In terms of biological role, cell wall formation. This Sinorhizobium fredii (strain NBRC 101917 / NGR234) protein is D-alanine--D-alanine ligase.